Reading from the N-terminus, the 150-residue chain is Catabolic 3-dehydroquinase 1 (150 aa).

The active-site Proton acceptor is the Y24. 3 residues coordinate substrate: N75, H81, and D88. Residue H101 is the Proton donor of the active site. Substrate contacts are provided by residues 102–103 (VS) and R112.

It belongs to the type-II 3-dehydroquinase family. Homododecamer. Adopts a ring-like structure, composed of an arrangement of two hexameric rings stacked on top of one another.

The enzyme catalyses 3-dehydroquinate = 3-dehydroshikimate + H2O. The protein operates within aromatic compound metabolism; 3,4-dihydroxybenzoate biosynthesis; 3,4-dihydroxybenzoate from 3-dehydroquinate: step 1/2. Is involved in the catabolism of quinate. Allows the utilization of quinate as carbon source via the beta-ketoadipate pathway. This is Catabolic 3-dehydroquinase 1 from Aspergillus fumigatus (strain ATCC MYA-4609 / CBS 101355 / FGSC A1100 / Af293) (Neosartorya fumigata).